The chain runs to 529 residues: Lanosterol 14-alpha demethylase (529 aa).

Heme is bound at residue C468.

The protein belongs to the cytochrome P450 family. It depends on heme as a cofactor.

It localises to the membrane. The catalysed reaction is a 14alpha-methyl steroid + 3 reduced [NADPH--hemoprotein reductase] + 3 O2 = a Delta(14) steroid + formate + 3 oxidized [NADPH--hemoprotein reductase] + 4 H2O + 4 H(+). It catalyses the reaction a 14alpha-methyl steroid + reduced [NADPH--hemoprotein reductase] + O2 = a 14alpha-hydroxymethyl steroid + oxidized [NADPH--hemoprotein reductase] + H2O + H(+). The enzyme catalyses a 14alpha-hydroxymethyl steroid + reduced [NADPH--hemoprotein reductase] + O2 = a 14alpha-formyl steroid + oxidized [NADPH--hemoprotein reductase] + 2 H2O + H(+). It carries out the reaction a 14alpha-formyl steroid + reduced [NADPH--hemoprotein reductase] + O2 = a Delta(14) steroid + formate + oxidized [NADPH--hemoprotein reductase] + H2O + 2 H(+). The catalysed reaction is lanosterol + 3 reduced [NADPH--hemoprotein reductase] + 3 O2 = 4,4-dimethyl-5alpha-cholesta-8,14,24-trien-3beta-ol + formate + 3 oxidized [NADPH--hemoprotein reductase] + 4 H2O + 4 H(+). It catalyses the reaction lanosterol + reduced [NADPH--hemoprotein reductase] + O2 = 32-hydroxylanosterol + oxidized [NADPH--hemoprotein reductase] + H2O + H(+). The enzyme catalyses 32-hydroxylanosterol + reduced [NADPH--hemoprotein reductase] + O2 = 32-oxolanosterol + oxidized [NADPH--hemoprotein reductase] + 2 H2O + H(+). It carries out the reaction 32-oxolanosterol + reduced [NADPH--hemoprotein reductase] + O2 = 4,4-dimethyl-5alpha-cholesta-8,14,24-trien-3beta-ol + formate + oxidized [NADPH--hemoprotein reductase] + H2O + 2 H(+). The catalysed reaction is eburicol + 3 reduced [NADPH--hemoprotein reductase] + 3 O2 = 14-demethyleburicol + formate + 3 oxidized [NADPH--hemoprotein reductase] + 4 H2O + 4 H(+). It catalyses the reaction eburicol + reduced [NADPH--hemoprotein reductase] + O2 = 32-hydroxyeburicol + oxidized [NADPH--hemoprotein reductase] + H2O + H(+). The enzyme catalyses 32-hydroxyeburicol + reduced [NADPH--hemoprotein reductase] + O2 = 32-oxoeburicol + oxidized [NADPH--hemoprotein reductase] + 2 H2O + H(+). It carries out the reaction 32-oxoeburicol + reduced [NADPH--hemoprotein reductase] + O2 = 14-demethyleburicol + formate + oxidized [NADPH--hemoprotein reductase] + H2O + 2 H(+). The protein operates within steroid biosynthesis; zymosterol biosynthesis; zymosterol from lanosterol: step 1/6. Its function is as follows. Sterol 14alpha-demethylase that plays a critical role in the third module of ergosterol biosynthesis pathway, being ergosterol the major sterol component in fungal membranes that participates in a variety of functions. The third module or late pathway involves the ergosterol synthesis itself through consecutive reactions that mainly occur in the endoplasmic reticulum (ER) membrane. In filamentous fungi, during the initial step of this module, lanosterol (lanosta-8,24-dien-3beta-ol) can be metabolized to eburicol. Sterol 14alpha-demethylase catalyzes the three-step oxidative removal of the 14alpha-methyl group (C-32) of both these sterols in the form of formate, and converts eburicol and lanosterol to 14-demethyleburicol (4,4,24-trimethylergosta-8,14,24(28)-trienol) and 4,4-dimethyl-5alpha-cholesta-8,14,24-trien-3beta-ol, respectively, which are further metabolized by other enzymes in the pathway to ergosterol. Can also use substrates not intrinsic to fungi, such as 24,25-dihydrolanosterol (DHL), producing 4,4-dimethyl-8,14-cholestadien-3-beta-ol, but at lower rates than the endogenous substrates. The protein is Lanosterol 14-alpha demethylase (ERG11) of Eremothecium gossypii (strain ATCC 10895 / CBS 109.51 / FGSC 9923 / NRRL Y-1056) (Yeast).